The chain runs to 519 residues: MVVDDLHRLASSQFKLPVAPILFTALAATIGAFLLSSLRSYILYHRKMSLFPAPNSDSAFRSFFSSKARDKFLSNAQELIRQGFSQNKFAIRLKTDFTDVLLLSPRYLPQLRTEDRLQGGPYTVQELLGYLPGFEPFRFADQMPKFIPDVILTRMNRYLSNVPASITEEVEVNLAENWTDEKDWHSVHLHGTMLGLVGQCSIRTFLGPEMCRKKRWVDLHTEYTVAVVTAVQALRKWPRALVSIVQWFHPKAKAARALLNEARAMIQPMHEQRKRDMAAGKPVPADTLTWFEEVAKGQAYDAAVVQLTMALAGLHSSTDLLCAVMLNLSEHPDVVEALRQELVQVLKREGWKQTTFSQLTLMDSVLKESQRLKPVGRAFFKRVAVDNIKLDHGVEIPKGAFVAVSNHGMWDPHNYTDPDKFDAYRFARMSDNKSSAFSTVSVEHTGFGFGKNSCPGRNYVALQLKIILAHLLLKYEWRLPDNYTPATFNNGFDLIADPFAQVLVRRRLEAPEVSLRQNT.

Residues 16 to 36 (LPVAPILFTALAATIGAFLLS) form a helical membrane-spanning segment. N-linked (GlcNAc...) asparagine glycosylation is found at asparagine 177, asparagine 327, asparagine 414, and asparagine 432. Position 454 (cysteine 454) interacts with heme.

The protein belongs to the cytochrome P450 family. Heme is required as a cofactor.

It is found in the membrane. It participates in mycotoxin biosynthesis. In terms of biological role, cytochrome P450 monooxygenase; part of the 2 gene clusters that mediate the biosynthesis of fusicoccins, diterpene glucosides that display phytohormone-like activity and function as potent activators of plasma membrane H(+)-ATPases in plants by modifying 14-3-3 proteins and cause the plant disease constriction canker. The first step in the pathway is performed by the fusicoccadiene synthase PaFS that possesses both prenyl transferase and terpene cyclase activity, converting isopentenyl diphosphate and dimethylallyl diphosphate into geranylgeranyl diphosphate (GGDP) and successively converting GGDP into fusicocca-2,10(14)-diene, a precursor for fusicoccin H. The second step is the oxidation at the C-8 position by the cytochrome P450 monooxygenase PaP450-2 to yield fusicocca-2,10(14)-diene-8-beta-ol. The cytochrome P450 monooxygenase PaP450-1 then catalyzes the hydroxylation at the C-16 position to produce fusicocca-2,10(14)-diene-8-beta,16-diol. The dioxygenase fc-dox then catalyzes the 16-oxydation of fusicocca-2,10(14)-diene-8-beta,16-diol to yield an aldehyde (8-beta-hydroxyfusicocca-1,10(14)-dien-16-al). The short-chain dehydrogenase/reductase fc-sdr catalyzes the reduction of the aldehyde to yield fusicocca-1,10(14)-diene-8-beta,16-diol. The next step is the hydroxylation at C-9 performed by the cytochrome P450 monooxygenase PaP450-3 that leads to fusicoccin H aglycon which is glycosylated to fusicoccin H by the O-glycosyltransferase PaGT. Hydroxylation at C-12 by the cytochrome P450 monooxygenase PaP450-4 leads then to the production of fusicoccin Q and is followed by methylation by the O-methyltransferase PaMT to yield fusicoccin P. Fusicoccin P is further converted to fusicoccin J via prenylation by the O-glucose prenyltransferase PaPT. Cytochrome P450 monooxygenase PaP450-5 then performs hydroxylation at C-19 to yield dideacetyl-fusicoccin A which is acetylated to 3'-O-deacetyl-fusicoccin A by the O-acetyltransferase PaAT-2. Finally, a another acetylation by the O-acetyltransferase PaAT-1 yields fusicoccin A. The sequence is that of Dideacetyl fusicoccin A C-19 hydroxylase from Phomopsis amygdali (Fusicoccum amygdali).